The following is a 514-amino-acid chain: Glucose-6-phosphate 1-dehydrogenase 2 (514 aa).

Residues Arg-69 and Lys-176 each coordinate NADP(+). Substrate is bound by residues His-206, Lys-210, Glu-244, and Asp-263. The Proton acceptor role is filled by His-268. Lys-366 serves as a coordination point for substrate.

This sequence belongs to the glucose-6-phosphate dehydrogenase family.

The catalysed reaction is D-glucose 6-phosphate + NADP(+) = 6-phospho-D-glucono-1,5-lactone + NADPH + H(+). Its pathway is carbohydrate degradation; pentose phosphate pathway; D-ribulose 5-phosphate from D-glucose 6-phosphate (oxidative stage): step 1/3. Functionally, catalyzes the oxidation of glucose 6-phosphate to 6-phosphogluconolactone. This is Glucose-6-phosphate 1-dehydrogenase 2 from Mycobacterium bovis (strain ATCC BAA-935 / AF2122/97).